A 197-amino-acid polypeptide reads, in one-letter code: ATP synthase subunit delta', mitochondrial (197 aa).

The N-terminal 19 residues, 1–19 (MFRRATSTFLSRASATRRF), are a transit peptide targeting the mitochondrion.

The protein belongs to the ATPase epsilon chain family. In terms of assembly, F-type ATPases have 2 components, CF(1) - the catalytic core - and CF(0) - the membrane proton channel. CF(1) has five subunits: alpha(3), beta(3), gamma(1), delta(1), epsilon(1). CF(0) has three main subunits: a, b and c.

It localises to the mitochondrion. The protein resides in the mitochondrion inner membrane. Mitochondrial membrane ATP synthase (F(1)F(0) ATP synthase or Complex V) produces ATP from ADP in the presence of a proton gradient across the membrane which is generated by electron transport complexes of the respiratory chain. F-type ATPases consist of two structural domains, F(1) - containing the extramembraneous catalytic core, and F(0) - containing the membrane proton channel, linked together by a central stalk and a peripheral stalk. During catalysis, ATP turnover in the catalytic domain of F(1) is coupled via a rotary mechanism of the central stalk subunits to proton translocation. Part of the complex F(1) domain and of the central stalk which is part of the complex rotary element. Rotation of the central stalk against the surrounding alpha(3)beta(3) subunits leads to hydrolysis of ATP in three separate catalytic sites on the beta subunits. The sequence is that of ATP synthase subunit delta', mitochondrial from Pisum sativum (Garden pea).